Reading from the N-terminus, the 202-residue chain is MKLLHIDSSILGDASASRQLSAELVQAWRQNEDGLDVTYRDLAADAVAHFSALTLAAGSTPAELRDAALKHEVAVGEEVLEEFLAADVVVIGAPMYNFTISSQLKAWIDRIAVAGKTFRYTENGPVGLAGDKKVVIVSTAGGVHAGQPTGAAHEGYLRTVLGFFGITDIEVVRAEGLAYGEEPRTQAIAAARRQIAGQFAAA.

Residues Ser9, 15 to 17, 95 to 98, and 139 to 142 contribute to the FMN site; these read SAS, MYNF, and TAGG.

This sequence belongs to the azoreductase type 1 family. As to quaternary structure, homodimer. It depends on FMN as a cofactor.

It carries out the reaction 2 a quinone + NADH + H(+) = 2 a 1,4-benzosemiquinone + NAD(+). The catalysed reaction is N,N-dimethyl-1,4-phenylenediamine + anthranilate + 2 NAD(+) = 2-(4-dimethylaminophenyl)diazenylbenzoate + 2 NADH + 2 H(+). Quinone reductase that provides resistance to thiol-specific stress caused by electrophilic quinones. Reduces both benzoquinones and naphthoquinones efficiently. Its function is as follows. Also exhibits azoreductase activity. Catalyzes the reductive cleavage of the azo bond in aromatic azo compounds to the corresponding amines. Preferred substrates are the large bis-azo dye Ponceau BS, amaranth and tropaeolin O. In Pseudomonas aeruginosa (strain ATCC 15692 / DSM 22644 / CIP 104116 / JCM 14847 / LMG 12228 / 1C / PRS 101 / PAO1), this protein is FMN-dependent NADH:quinone oxidoreductase 2.